The following is a 236-amino-acid chain: Protein N-lysine methyltransferase METTL21A (236 aa).

S-adenosyl-L-methionine is bound by residues tryptophan 47, 73–75 (GAG), aspartate 112, tryptophan 143, and alanine 161.

Belongs to the methyltransferase superfamily. METTL21 family. As to quaternary structure, interacts with heat shock 70 family members; at least some of these proteins are methylation substrates.

It localises to the cytoplasm. It catalyses the reaction L-lysyl-[protein] + 3 S-adenosyl-L-methionine = N(6),N(6),N(6)-trimethyl-L-lysyl-[protein] + 3 S-adenosyl-L-homocysteine + 3 H(+). Functionally, protein-lysine methyltransferase that selectively trimethylates residues in heat shock protein 70 (HSP70) family members. Contributes to the in vivo trimethylation of Lys residues in HSPA1 and HSPA8. In vitro methylates 'Lys-561' in HSPA1, 'Lys-564' in HSPA2, 'Lys-585' in HSPA5, 'Lys-563' in HSPA6 and 'Lys-561' in HSPA8. The protein is Protein N-lysine methyltransferase METTL21A (METTL21A) of Pongo abelii (Sumatran orangutan).